Consider the following 173-residue polypeptide: MTDDLIKKAIGETIGELSATSGEEIYVVEAAIRAGGRKIELTVDTDKGVSIDQCAKLSRAIRARLEACEEDSMLSSGEFDLMVSSPGIGEPIQVQRQYLRHLGRLIRVNYLDEEEQPKEITGKLLEAAVGPEAEQPSITIEAVKEGRKKRTAGEPPVTIRLADVVRAVVQTEL.

Belongs to the RimP family.

It localises to the cytoplasm. In terms of biological role, required for maturation of 30S ribosomal subunits. In Chlorobaculum tepidum (strain ATCC 49652 / DSM 12025 / NBRC 103806 / TLS) (Chlorobium tepidum), this protein is Ribosome maturation factor RimP.